A 259-amino-acid chain; its full sequence is MLLCIDTGNTNTVFSVWDGEKFVGLWRISTDHRRTADEYFVWLSTLISLQKLELNIDACIISSTAPRVVFNLRVLCNRYFDTRPLVVGKPDCLLPVAPRVDFGTVVGPDRLVNTWGAFERHGPDLIVVDFGTATTFDVVDTDGAYVGGVIAPGVNLSLEALHMGAASLPHVDVTMPAKVIGTNTVACIQSGIFWGYIGLVQGVVDKIRLERGRPMKVIATGGLAPLFDQGFDLFDAIEDDLTMHGLRLIHDYNKEMGNG.

6 to 13 (DTGNTNTV) is a binding site for ATP. Residue 107–110 (GPDR) coordinates substrate. The active-site Proton acceptor is the D109. Residue D129 coordinates K(+). T132 contributes to the ATP binding site. A substrate-binding site is contributed by T184.

It belongs to the type III pantothenate kinase family. Homodimer. NH4(+) is required as a cofactor. It depends on K(+) as a cofactor.

The protein localises to the cytoplasm. The catalysed reaction is (R)-pantothenate + ATP = (R)-4'-phosphopantothenate + ADP + H(+). The protein operates within cofactor biosynthesis; coenzyme A biosynthesis; CoA from (R)-pantothenate: step 1/5. In terms of biological role, catalyzes the phosphorylation of pantothenate (Pan), the first step in CoA biosynthesis. The sequence is that of Type III pantothenate kinase from Paracoccus denitrificans (strain Pd 1222).